Reading from the N-terminus, the 731-residue chain is Gene 24 protein (731 aa).

Belongs to the herpesviridae UL87 family.

This Saimiri sciureus (Common squirrel monkey) protein is Gene 24 protein (24).